The chain runs to 134 residues: Small ribosomal subunit protein uS9 (134 aa).

The disordered stretch occupies residues 114–134 (QKESKNFGGPGARAKYQKSYR).

Belongs to the universal ribosomal protein uS9 family.

The protein is Small ribosomal subunit protein uS9 of Methanosarcina acetivorans (strain ATCC 35395 / DSM 2834 / JCM 12185 / C2A).